A 140-amino-acid chain; its full sequence is Mediator of RNA polymerase II transcription subunit 21 (140 aa).

Residues 52–130 are a coiled coil; the sequence is EERERTLEEL…CDELILKLAQ (79 aa).

It belongs to the Mediator complex subunit 21 family. In terms of assembly, component of the Mediator complex.

The protein localises to the nucleus. Functionally, component of the Mediator complex, a coactivator involved in the regulated transcription of nearly all RNA polymerase II-dependent genes. Mediator functions as a bridge to convey information from gene-specific regulatory proteins to the basal RNA polymerase II transcription machinery. Mediator is recruited to promoters by direct interactions with regulatory proteins and serves as a scaffold for the assembly of a functional preinitiation complex with RNA polymerase II and the general transcription factors. This is Mediator of RNA polymerase II transcription subunit 21 (SRB7) from Yarrowia lipolytica (strain CLIB 122 / E 150) (Yeast).